Here is a 191-residue protein sequence, read N- to C-terminus: MSKNQLPSYQVVADEMKMATLAVTPAELHGLLAGMISGGLSQQDQSWQPMLFDYTNDGMGWPSAALEQAQALFNVTSAQLTSDEMVLNLLLPNAEGEEAIFALADALSDWVNHYISGLGLAGAALNKASEEAKEALADLEEMARLGVDEDDDLQEQAELLEQVIEHVKACALLIHAEFGAKTSSSETPTIH.

It belongs to the UPF0149 family.

This Vibrio vulnificus (strain YJ016) protein is UPF0149 protein VV2847.